Consider the following 449-residue polypeptide: Phosphoglucosamine mutase (449 aa).

The active-site Phosphoserine intermediate is serine 99. Positions 99, 239, 241, and 243 each coordinate Mg(2+). Serine 99 is modified (phosphoserine).

Belongs to the phosphohexose mutase family. The cofactor is Mg(2+). Post-translationally, activated by phosphorylation.

The enzyme catalyses alpha-D-glucosamine 1-phosphate = D-glucosamine 6-phosphate. In terms of biological role, catalyzes the conversion of glucosamine-6-phosphate to glucosamine-1-phosphate. In Finegoldia magna (strain ATCC 29328 / DSM 20472 / WAL 2508) (Peptostreptococcus magnus), this protein is Phosphoglucosamine mutase.